A 147-amino-acid polypeptide reads, in one-letter code: Transmembrane protein 210 (147 aa).

The signal sequence occupies residues 1 to 31 (MAPGPWPVSCLRGGPLGLTYLSLLLIPAAAG). Residues 32-47 (TYCECSLGLSREALIA) are Extracellular-facing. The helical transmembrane segment at 48–68 (LLVVLAGISASCFCALVIVAI) threads the bilayer. Topologically, residues 69–147 (GVLRAKGETC…PPPPPPLPPE (79 aa)) are cytoplasmic. Residues 128 to 147 (AIPMEASSEEPPPPPPLPPE) are disordered. Over residues 137–147 (EPPPPPPLPPE) the composition is skewed to pro residues.

It localises to the membrane. The protein localises to the cytoplasmic vesicle. The protein resides in the secretory vesicle. Its subcellular location is the acrosome. This is Transmembrane protein 210 (TMEM210) from Homo sapiens (Human).